The following is an 87-amino-acid chain: Small ribosomal subunit protein bS20 (87 aa).

A disordered region spans residues 1–26; sequence MANIKSAKKRAVQSEKARKHNASRRS.

This sequence belongs to the bacterial ribosomal protein bS20 family.

Its function is as follows. Binds directly to 16S ribosomal RNA. This is Small ribosomal subunit protein bS20 from Salmonella gallinarum (strain 287/91 / NCTC 13346).